The chain runs to 435 residues: Zinc finger CCCH domain-containing protein 67 (435 aa).

Residues 1–91 (MSKPEETSDP…DQKEEEEGSE (91 aa)) are disordered. C3H1-type zinc fingers lie at residues 101-129 (RPDSEDCSFYMRTGSCKYGSSCKFNHPVR), 148-176 (NPKLMECKYYFRTGGCKYGESCRFSHMKE), and 194-222 (RPGEKECPFYMRNGSCKFGSDCKFNHPDP). The segment at 235-274 (GNNGGSFSPKAPSQASSTSWSSTRHMNGTGTAPFIPSMFP) is disordered. A compositionally biased stretch (low complexity) spans 247 to 256 (SQASSTSWSS). C3H1-type zinc fingers lie at residues 334–362 (RPDQPECTYYLKTGDCKFKYKCKYHHPKN) and 380–408 (RPDQSMCTHYSRYGICKFGPACRFDHSIP). Residues 412–435 (SPSSSQTVEARQVGANGNEDDSWH) form a disordered region.

The protein resides in the nucleus. This is Zinc finger CCCH domain-containing protein 67 from Arabidopsis thaliana (Mouse-ear cress).